Here is a 603-residue protein sequence, read N- to C-terminus: Cholinesterase (603 aa).

The N-terminal stretch at 1–29 is a signal peptide; sequence MQTQHTKVTQTHFLLWILLLCMPFGKSHT. N-linked (GlcNAc...) asparagine glycosylation is present at Asn-86. Residues Cys-94 and Cys-121 are joined by a disulfide bond. An N-linked (GlcNAc...) asparagine glycan is attached at Asn-135. 145-146 contacts substrate; sequence GG. Ser-227 functions as the Acyl-ester intermediate in the catalytic mechanism. Ser-227 carries the phosphoserine modification. An N-linked (GlcNAc...) asparagine glycan is attached at Asn-270. An intrachain disulfide couples Cys-281 to Cys-292. The active-site Charge relay system is Glu-354. N-linked (GlcNAc...) asparagine glycosylation occurs at Asn-370. Cys-429 and Cys-548 form a disulfide bridge. The active-site Charge relay system is His-467. 3 N-linked (GlcNAc...) asparagine glycosylation sites follow: Asn-484, Asn-510, and Asn-515.

This sequence belongs to the type-B carboxylesterase/lipase family. As to quaternary structure, homotetramer; disulfide-linked. Dimer of dimers. Present in most cells except erythrocytes.

Its subcellular location is the secreted. It catalyses the reaction an acylcholine + H2O = a carboxylate + choline + H(+). Esterase with broad substrate specificity. Contributes to the inactivation of the neurotransmitter acetylcholine. Can degrade neurotoxic organophosphate esters. This chain is Cholinesterase (Bche), found in Mus musculus (Mouse).